A 944-amino-acid polypeptide reads, in one-letter code: Bifunctional uridylyltransferase/uridylyl-removing enzyme (944 aa).

Residues M1–A371 are uridylyltransferase. The tract at residues G372–T727 is uridylyl-removing. In terms of domain architecture, HD spans V488–L604. ACT domains are found at residues E728 to A809 and V839 to R918. The interval E911–I944 is disordered. Low complexity predominate over residues A925 to A935.

This sequence belongs to the GlnD family. Mg(2+) is required as a cofactor.

The enzyme catalyses [protein-PII]-L-tyrosine + UTP = [protein-PII]-uridylyl-L-tyrosine + diphosphate. It carries out the reaction [protein-PII]-uridylyl-L-tyrosine + H2O = [protein-PII]-L-tyrosine + UMP + H(+). Its activity is regulated as follows. Uridylyltransferase (UTase) activity is inhibited by glutamine, while glutamine likely activates uridylyl-removing (UR) activity. Functionally, modifies, by uridylylation and deuridylylation, the PII regulatory proteins GlnB and GlnK, in response to the nitrogen status of the cell that GlnD senses through the glutamine level. Under low glutamine levels, catalyzes the conversion of the PII proteins and UTP to PII-UMP and PPi, while under higher glutamine levels, GlnD likely hydrolyzes PII-UMP to PII and UMP (deuridylylation). Thus, controls uridylylation state and activity of the PII proteins, and plays an important role in the regulation of nitrogen metabolism. This Rhizobium leguminosarum bv. viciae protein is Bifunctional uridylyltransferase/uridylyl-removing enzyme.